The chain runs to 138 residues: Large ribosomal subunit protein uL16c (138 aa).

The protein belongs to the universal ribosomal protein uL16 family. As to quaternary structure, part of the 50S ribosomal subunit.

The protein resides in the plastid. The protein localises to the chloroplast. This Tetradesmus obliquus (Green alga) protein is Large ribosomal subunit protein uL16c.